Here is a 394-residue protein sequence, read N- to C-terminus: Isopentenyl-diphosphate delta-isomerase (394 aa).

Position 10–11 (10–11 (RK)) interacts with substrate. FMN is bound by residues Thr67, 68–70 (GMT), Ser101, and Asn129. Substrate is bound at residue 101–103 (SQR). A substrate-binding site is contributed by Gln168. Mg(2+) is bound at residue Glu169. FMN is bound by residues Lys200, Ser225, Thr230, 279 to 281 (GMR), and 300 to 301 (AL).

The protein belongs to the IPP isomerase type 2 family. In terms of assembly, homooctamer. Dimer of tetramers. It depends on FMN as a cofactor. NADPH is required as a cofactor. The cofactor is Mg(2+).

It localises to the cytoplasm. It catalyses the reaction isopentenyl diphosphate = dimethylallyl diphosphate. Functionally, involved in the biosynthesis of isoprenoids. Catalyzes the 1,3-allylic rearrangement of the homoallylic substrate isopentenyl (IPP) to its allylic isomer, dimethylallyl diphosphate (DMAPP). The polypeptide is Isopentenyl-diphosphate delta-isomerase (Pyrococcus furiosus (strain ATCC 43587 / DSM 3638 / JCM 8422 / Vc1)).